Consider the following 322-residue polypeptide: Phosphate acetyltransferase (322 aa).

It belongs to the phosphate acetyltransferase and butyryltransferase family.

The protein resides in the cytoplasm. The enzyme catalyses acetyl-CoA + phosphate = acetyl phosphate + CoA. It functions in the pathway metabolic intermediate biosynthesis; acetyl-CoA biosynthesis; acetyl-CoA from acetate: step 2/2. The chain is Phosphate acetyltransferase (pta) from Mycoplasma capricolum subsp. capricolum (strain California kid / ATCC 27343 / NCTC 10154).